A 420-amino-acid polypeptide reads, in one-letter code: Glucose-1-phosphate adenylyltransferase (420 aa).

Alpha-D-glucose 1-phosphate is bound by residues Tyr-107, Gly-172, 187–188 (EK), and Ser-205.

The protein belongs to the bacterial/plant glucose-1-phosphate adenylyltransferase family. As to quaternary structure, homotetramer.

It catalyses the reaction alpha-D-glucose 1-phosphate + ATP + H(+) = ADP-alpha-D-glucose + diphosphate. It functions in the pathway glycan biosynthesis; glycogen biosynthesis. Involved in the biosynthesis of ADP-glucose, a building block required for the elongation reactions to produce glycogen. Catalyzes the reaction between ATP and alpha-D-glucose 1-phosphate (G1P) to produce pyrophosphate and ADP-Glc. The chain is Glucose-1-phosphate adenylyltransferase from Rhodopseudomonas palustris (strain HaA2).